The following is a 620-amino-acid chain: Chaperone protein HtpG (620 aa).

The tract at residues 1–334 (MTTTDTAPQS…SEDLPLNLSR (334 aa)) is a; substrate-binding. The b stretch occupies residues 335–548 (EMLQNNPQLA…GLGPDRALER (214 aa)). Positions 549–620 (MLAQQNRGAA…RLNRLVLRAL (72 aa)) are c.

It belongs to the heat shock protein 90 family. As to quaternary structure, homodimer.

The protein localises to the cytoplasm. Its function is as follows. Molecular chaperone. Has ATPase activity. This is Chaperone protein HtpG from Rhodopseudomonas palustris (strain BisB18).